The primary structure comprises 452 residues: UDP-N-acetylmuramoylalanine--D-glutamate ligase (452 aa).

Position 115–121 (glycine 115–threonine 121) interacts with ATP.

Belongs to the MurCDEF family.

The protein localises to the cytoplasm. The enzyme catalyses UDP-N-acetyl-alpha-D-muramoyl-L-alanine + D-glutamate + ATP = UDP-N-acetyl-alpha-D-muramoyl-L-alanyl-D-glutamate + ADP + phosphate + H(+). Its pathway is cell wall biogenesis; peptidoglycan biosynthesis. Its function is as follows. Cell wall formation. Catalyzes the addition of glutamate to the nucleotide precursor UDP-N-acetylmuramoyl-L-alanine (UMA). This is UDP-N-acetylmuramoylalanine--D-glutamate ligase from Geobacter sp. (strain M21).